The chain runs to 377 residues: Alanine racemase (377 aa).

The active-site Proton acceptor; specific for D-alanine is Lys-39. Lys-39 carries the N6-(pyridoxal phosphate)lysine modification. Arg-137 provides a ligand contact to substrate. Tyr-266 serves as the catalytic Proton acceptor; specific for L-alanine. Substrate is bound at residue Met-314.

This sequence belongs to the alanine racemase family. The cofactor is pyridoxal 5'-phosphate.

The catalysed reaction is L-alanine = D-alanine. The protein operates within amino-acid biosynthesis; D-alanine biosynthesis; D-alanine from L-alanine: step 1/1. Catalyzes the interconversion of L-alanine and D-alanine. May also act on other amino acids. In Symbiobacterium thermophilum (strain DSM 24528 / JCM 14929 / IAM 14863 / T), this protein is Alanine racemase (alr).